The chain runs to 176 residues: RNA pyrophosphohydrolase (176 aa).

One can recognise a Nudix hydrolase domain in the interval 6-149; sequence GYRPNVGIVI…KRDVYRRVMK (144 aa). The Nudix box signature appears at 38 to 59; the sequence is GGINPGESAEQAMYRELFEEVG.

This sequence belongs to the Nudix hydrolase family. RppH subfamily. A divalent metal cation is required as a cofactor.

In terms of biological role, accelerates the degradation of transcripts by removing pyrophosphate from the 5'-end of triphosphorylated RNA, leading to a more labile monophosphorylated state that can stimulate subsequent ribonuclease cleavage. The chain is RNA pyrophosphohydrolase from Salmonella arizonae (strain ATCC BAA-731 / CDC346-86 / RSK2980).